Here is a 159-residue protein sequence, read N- to C-terminus: Ribosomal RNA large subunit methyltransferase H (159 aa).

Residues Leu-76, Gly-108, and 127–132 (FSNMTF) contribute to the S-adenosyl-L-methionine site.

It belongs to the RNA methyltransferase RlmH family. As to quaternary structure, homodimer.

The protein localises to the cytoplasm. The enzyme catalyses pseudouridine(1915) in 23S rRNA + S-adenosyl-L-methionine = N(3)-methylpseudouridine(1915) in 23S rRNA + S-adenosyl-L-homocysteine + H(+). Its function is as follows. Specifically methylates the pseudouridine at position 1915 (m3Psi1915) in 23S rRNA. The polypeptide is Ribosomal RNA large subunit methyltransferase H (Staphylococcus epidermidis (strain ATCC 35984 / DSM 28319 / BCRC 17069 / CCUG 31568 / BM 3577 / RP62A)).